A 183-amino-acid polypeptide reads, in one-letter code: Holliday junction branch migration complex subunit RuvA (183 aa).

The domain I stretch occupies residues 1-63 (MIVGLIGVVE…EDAHLLYGFL (63 aa)). The domain II stretch occupies residues 64-139 (EEGEKILFER…FFIQDENRPA (76 aa)). Position 139 (Ala139) is a region of interest, flexible linker. The domain III stretch occupies residues 139–183 (ARNEVFLALESLGFKSAEINQVLKTLKPNLSIEAAIKEALQQLRS).

It belongs to the RuvA family. As to quaternary structure, homotetramer. Forms an RuvA(8)-RuvB(12)-Holliday junction (HJ) complex. HJ DNA is sandwiched between 2 RuvA tetramers; dsDNA enters through RuvA and exits via RuvB. An RuvB hexamer assembles on each DNA strand where it exits the tetramer. Each RuvB hexamer is contacted by two RuvA subunits (via domain III) on 2 adjacent RuvB subunits; this complex drives branch migration. In the full resolvosome a probable DNA-RuvA(4)-RuvB(12)-RuvC(2) complex forms which resolves the HJ.

The protein localises to the cytoplasm. In terms of biological role, the RuvA-RuvB-RuvC complex processes Holliday junction (HJ) DNA during genetic recombination and DNA repair, while the RuvA-RuvB complex plays an important role in the rescue of blocked DNA replication forks via replication fork reversal (RFR). RuvA specifically binds to HJ cruciform DNA, conferring on it an open structure. The RuvB hexamer acts as an ATP-dependent pump, pulling dsDNA into and through the RuvAB complex. HJ branch migration allows RuvC to scan DNA until it finds its consensus sequence, where it cleaves and resolves the cruciform DNA. The sequence is that of Holliday junction branch migration complex subunit RuvA from Helicobacter pylori (strain ATCC 700392 / 26695) (Campylobacter pylori).